A 95-amino-acid polypeptide reads, in one-letter code: Enhancer of yellow 2b transcription factor (95 aa).

It belongs to the ENY2 family. As to expression, expressed specifically in testis.

Testis-specific paralog of the ubiquitously expressed transcription and mRNA export factor e(y)2. Cannot functionally replace e(y)2. The polypeptide is Enhancer of yellow 2b transcription factor (e(y)2b) (Drosophila melanogaster (Fruit fly)).